Here is a 191-residue protein sequence, read N- to C-terminus: GDP-mannose pyrophosphatase (191 aa).

GDP-alpha-D-mannose contacts are provided by residues Tyr-17, 38 to 40, Arg-67, and 85 to 87; these read KRE and AGL. One can recognise a Nudix hydrolase domain in the interval 43–180; the sequence is DRGNGATILL…EIRDGKTVLL (138 aa). Residues Ala-85, Glu-100, and Glu-104 each coordinate Mg(2+). A Nudix box motif is present at residues 86 to 106; sequence GLLDNDEPEVCIRKEAIEETG. Residues Glu-104, Glu-127, 150–151, and Lys-176 each bind GDP-alpha-D-mannose; that span reads DE. Position 151 (Glu-151) interacts with Mg(2+).

This sequence belongs to the Nudix hydrolase family. NudK subfamily. Homodimer. It depends on Mg(2+) as a cofactor.

The catalysed reaction is GDP-alpha-D-mannose + H2O = alpha-D-mannose 1-phosphate + GMP + 2 H(+). In terms of biological role, nucleoside diphosphate sugar hydrolase that hydrolyzes GDP-mannose as its preferred substrate, yielding GMP and mannose-1-phosphate. In Salmonella arizonae (strain ATCC BAA-731 / CDC346-86 / RSK2980), this protein is GDP-mannose pyrophosphatase (nudK).